We begin with the raw amino-acid sequence, 347 residues long: Protein RecA (347 aa).

Residue 64–71 (GPESSGKT) coordinates ATP.

The protein belongs to the RecA family.

The protein localises to the cytoplasm. In terms of biological role, can catalyze the hydrolysis of ATP in the presence of single-stranded DNA, the ATP-dependent uptake of single-stranded DNA by duplex DNA, and the ATP-dependent hybridization of homologous single-stranded DNAs. It interacts with LexA causing its activation and leading to its autocatalytic cleavage. The sequence is that of Protein RecA from Bartonella henselae (strain ATCC 49882 / DSM 28221 / CCUG 30454 / Houston 1) (Rochalimaea henselae).